A 447-amino-acid chain; its full sequence is Trigger factor (447 aa).

The 86-residue stretch at 159–244 (GDMLLMQVES…VREIKEEKLP (86 aa)) folds into the PPIase FKBP-type domain.

This sequence belongs to the FKBP-type PPIase family. Tig subfamily.

The protein resides in the cytoplasm. It carries out the reaction [protein]-peptidylproline (omega=180) = [protein]-peptidylproline (omega=0). Functionally, involved in protein export. Acts as a chaperone by maintaining the newly synthesized protein in an open conformation. Functions as a peptidyl-prolyl cis-trans isomerase. The chain is Trigger factor from Dehalococcoides mccartyi (strain ATCC BAA-2100 / JCM 16839 / KCTC 5957 / BAV1).